We begin with the raw amino-acid sequence, 323 residues long: Olfactory receptor 2T35 (323 aa).

Over 1-26 the chain is Extracellular; that stretch reads MGMEGLLQNSTNFVLTGLITHPAFPG. An N-linked (GlcNAc...) asparagine glycan is attached at Asn9. The helical transmembrane segment at 27 to 50 threads the bilayer; the sequence is LLFAVVFSIFVVAITANLVMILLI. Residues 51–58 are Cytoplasmic-facing; that stretch reads HMDSRLHT. The helical transmembrane segment at 59–80 threads the bilayer; the sequence is PMYFLLSQLSIMDTIYICITVP. Residues 81–101 lie on the Extracellular side of the membrane; that stretch reads KMLQDLLSKDKTISFLGCAVQ. A disulfide bridge connects residues Cys98 and Cys189. A helical membrane pass occupies residues 102–120; it reads IFYLTLIGGEFFLLGLMAY. The Cytoplasmic portion of the chain corresponds to 121 to 139; sequence DRYVAVCNPLRYPLLMNRR. The chain crosses the membrane as a helical span at residues 140 to 158; that stretch reads VCLFMVVGSWVGGSLDGFM. Over 159 to 195 the chain is Extracellular; the sequence is LTPVTMSFPFCRSREINHFFCEIPAVLKLSCTDTSLY. The helical transmembrane segment at 196-219 threads the bilayer; that stretch reads ETLMYACCVLMLLIPLSVISVSYT. The Cytoplasmic segment spans residues 220 to 236; sequence HILLTVHRMNSAEGRRK. Residues 237–259 traverse the membrane as a helical segment; sequence AFATCSSHIMVVSVFYGAAFYTN. Residues 260 to 272 are Extracellular-facing; it reads VLPHSYHTPEKDK. A helical transmembrane segment spans residues 273–292; sequence VVSAFYTILTPMLNPLIYSL. Over 293–323 the chain is Cytoplasmic; that stretch reads RNKDVAAALRKVLGRCGSSQSIRVATVIRKG.

Belongs to the G-protein coupled receptor 1 family.

The protein localises to the cell membrane. Functionally, odorant receptor. This chain is Olfactory receptor 2T35 (OR2T35), found in Homo sapiens (Human).